Here is a 789-residue protein sequence, read N- to C-terminus: MTKPAADASAVLTAEDTLVLASTATPVEMELIMGWLGQQRARHPDSKFDILKLPPRNAPPAALTALVEQLEPGFASSPQSGEDRSIVPVRVIWLPPADRSRAGKVAALLPGRDPYHPSQRQQRRILRTDPRRARVVAGESAKVSELRQQWRDTTVAEHKRDFAQFVSRRALLALARAEYRILGPQYKSPRLVKPEMLASARFRAGLDRIPGATVEDAGKMLDELSTGWSQVSVDLVSVLGRLASRGFDPEFDYDEYQVAAMRAALEAHPAVLLFSHRSYIDGVVVPVAMQDNRLPPVHMFGGINLSFGLMGPLMRRSGMIFIRRNIGNDPLYKYVLKEYVGYVVEKRFNLSWSIEGTRSRTGKMLPPKLGLMSYVADAYLDGRSDDILLQGVSICFDQLHEITEYAAYARGAEKTPEGLRWLYNFIKAQGERNFGKIYVRFPEAVSMRQYLGAPHGELTQDPAAKRLALQKMSFEVAWRILQATPVTATGLVSALLLTTRGTALTLDQLHHTLQDSLDYLERKQSPVSTSALRLRSREGVRAAADALSNGHPVTRVDSGREPVWYIAPDDEHAAAFYRNSVIHAFLETSIVELALAHAKHAEGDRVAAFWAQAMRLRDLLKFDFYFADSTAFRANIAQEMAWHQDWEDHLGVGGNEIDAMLYAKRPLMSDAMLRVFFEAYEIVADVLRDAPPDIGPEELTELALGLGRQFVAQGRVRSSEPVSTLLFATARQVAVDQELIAPAADLAERRVAFRRELRNILRDFDYVEQIARNQFVAREFKARQGRDRI.

Residues 275–280 carry the HXXXXD motif motif; that stretch reads SHRSYI.

Belongs to the GPAT/DAPAT family.

It localises to the cell membrane. The enzyme catalyses sn-glycerol 3-phosphate + an acyl-CoA = a 1-acyl-sn-glycero-3-phosphate + CoA. The protein operates within phospholipid metabolism; CDP-diacylglycerol biosynthesis; CDP-diacylglycerol from sn-glycerol 3-phosphate: step 1/3. In Mycobacterium bovis (strain BCG / Pasteur 1173P2), this protein is Glycerol-3-phosphate acyltransferase.